The primary structure comprises 360 residues: MQRDIMRYLNPSLRDIAAYSVEGGQQAAIKLNQNESPFDLPMWLKDAIVSEFVREPWNRYPDILPYRGTKAYADFLGVPAEGVMMGNGSNELLYTIFLACLGPGRKILVPDPSFSLYEKLALLLQASLVRVPLKASLDFDVDAIIQSAQEESVDFVVLSSPNNPTGKSITFDDIRRIASSCDALVLVDEAYIEFSRQDSALPLIEEFPNLVVLRTMSKALALAGMRIGFAIGRPELIAEIAKPKIPFASSRLAEITLMHVLENYAIVTDAVSYILNARDELYGELLSVQGVEPFMSDTNFLVIRVPDADAVFRKLIGRGILVRNVSGYHLMKNCLRFNIGLPDENSRLLDALLAINGGMA.

The residue at position 218 (K218) is an N6-(pyridoxal phosphate)lysine.

This sequence belongs to the class-II pyridoxal-phosphate-dependent aminotransferase family. Histidinol-phosphate aminotransferase subfamily. As to quaternary structure, homodimer. It depends on pyridoxal 5'-phosphate as a cofactor.

It carries out the reaction L-histidinol phosphate + 2-oxoglutarate = 3-(imidazol-4-yl)-2-oxopropyl phosphate + L-glutamate. It participates in amino-acid biosynthesis; L-histidine biosynthesis; L-histidine from 5-phospho-alpha-D-ribose 1-diphosphate: step 7/9. This is Histidinol-phosphate aminotransferase from Chlorobium phaeovibrioides (strain DSM 265 / 1930) (Prosthecochloris vibrioformis (strain DSM 265)).